Consider the following 194-residue polypeptide: Large ribosomal subunit protein bL9c (194 aa).

The transit peptide at 1–39 (MASSTLSSLSSTPLQHSFAANLKTCSQFPNKSSGFMVFA) directs the protein to the chloroplast.

Belongs to the bacterial ribosomal protein bL9 family. In terms of assembly, part of the 50S ribosomal subunit.

The protein resides in the plastid. It localises to the chloroplast. Binds to the 23S rRNA. The protein is Large ribosomal subunit protein bL9c (RPL9) of Pisum sativum (Garden pea).